A 342-amino-acid chain; its full sequence is Serpentine receptor class gamma-69 (342 aa).

7 helical membrane-spanning segments follow: residues 11 to 31 (MAGLIGIYAFQGFYGLLSVVV), 51 to 71 (SLLYTCCAALSLTYFLDHFLI), 106 to 126 (PIAILVFHALIAAHRFSIVAA), 140 to 160 (LFVLVGFLIPLIFMWFMIPCK), 191 to 211 (IAAVLFGVLTLCLTFGMLIAL), 222 to 242 (AEISLIVFEVFMTVFTLIYAF), and 269 to 289 (FAIDIFILPQAWTLLFLSTTV).

Belongs to the nematode receptor-like protein srg family.

The protein resides in the membrane. The polypeptide is Serpentine receptor class gamma-69 (srg-69) (Caenorhabditis elegans).